Consider the following 488-residue polypeptide: Palmitoleoyl-protein carboxylesterase notum1 (488 aa).

Positions 1 to 20 are cleaved as a signal peptide; sequence MAGALCVTLLLLLSTNTVSG. An N-linked (GlcNAc...) asparagine glycan is attached at Asn-90. Active-site charge relay system residues include Ser-226, Asp-334, and His-383.

It belongs to the pectinacetylesterase family. Notum subfamily. Expressed in the egg and through cleavage to gastrulation stages. Enriched in the animal (prospective ectoderm) and dorsal regions in early gastrula. Shows a dynamic expression during embryogenesis, in particular during neural induction and antero-posterior (AP) patterning.

It localises to the secreted. It carries out the reaction [Wnt protein]-O-(9Z)-hexadecenoyl-L-serine + H2O = [Wnt protein]-L-serine + (9Z)-hexadecenoate + H(+). Carboxylesterase that acts as a key negative regulator of the Wnt signaling pathway by specifically mediating depalmitoleoylation of WNT proteins. Serine palmitoleoylation of WNT proteins is required for efficient binding to frizzled receptors. Functions in the prospective ectoderm and is required for neural induction. This chain is Palmitoleoyl-protein carboxylesterase notum1, found in Xenopus laevis (African clawed frog).